The sequence spans 560 residues: Protein SINE1 (560 aa).

Glycine 2 bears the N-acetylglycine mark. The segment at 7 to 287 (PILRQELANL…VRGAAYEAMM (281 aa)) is ARMADILLO-type fold. The KASH domain maps to 517–560 (KKKKKKMSYAKLVIAISFVVVALFATVILMVNQDDDVGYYTVPT). Residues 528-548 (LVIAISFVVVALFATVILMVN) traverse the membrane as a helical segment. Residues 557 to 560 (TVPT) carry the Required for nuclear localization motif.

Interacts with SUN1 and SUN2. Binds to F-actin. Preferentially expressed in guards cells, but also detected in root cells.

The protein resides in the nucleus membrane. In terms of biological role, plays a role in nucleus positioning in guard cells. The polypeptide is Protein SINE1 (Arabidopsis thaliana (Mouse-ear cress)).